The sequence spans 186 residues: ADP-ribosylation factor-like protein 8B (186 aa).

An intramembrane region (note=Mediates targeting to membranes) is located at residues 1–19 (MLALISRLLDWFRSLFWKE). Residues 29-35 (QYSGKTT), 71-75 (DIGGQ), and 130-133 (NKRD) contribute to the GTP site. Residue lysine 141 forms a Glycyl lysine isopeptide (Lys-Gly) (interchain with G-Cter in ubiquitin) linkage.

Belongs to the small GTPase superfamily. Arf family. Interacts with tubulin. Interacts with BORCS5; recruits ARL8B to lysosomes. Interacts with VPS41; the interaction mediates the recruitment of the HOPS complex to lysosomes. Interacts (GTP-bound form) with PLEKHM2 (via RUN domain); the interaction is required to recruit the motor protein kinesin-1 on lysosomes. Interacts (GTP-bound form) with PLEKHM1 (via RUN domain); the interaction is required for PLEKHM1 localization to lysosomes and for ARL8B function in delivery and degradation of endocytic and autophagic cargo in lysosomes. PLEKHM1 and PLEKHM2 compete for interaction with ARL8B. Interacts (GTP-bound form) with RUFY1; the interaction is required for RUFY1 endosomal location. When GTP-bound, interacts with RUFY3 and RUFY4, but not with RUFY1, nor RUFY2. Post-translationally, ubiquitinated at Lys-141 by RNF167, leading to its degradation.

Its subcellular location is the late endosome membrane. The protein resides in the lysosome membrane. The protein localises to the cytoplasm. It is found in the cytoskeleton. It localises to the spindle. Its subcellular location is the cell projection. The protein resides in the axon. The protein localises to the synapse. It is found in the cytolytic granule membrane. It localises to the early endosome membrane. It carries out the reaction GTP + H2O = GDP + phosphate + H(+). Functionally, small GTPase which cycles between active GTP-bound and inactive GDP-bound states. In its active state, binds to a variety of effector proteins playing a key role in the regulation of lysosomal positioning which is important for nutrient sensing, natural killer cell-mediated cytotoxicity and antigen presentation. Along with its effectors, orchestrates lysosomal transport and fusion. Localizes specifically to lysosomal membranes and mediates anterograde lysosomal motility by recruiting PLEKHM2, which in turn recruits the motor protein kinesin-1 on lysosomes. Required for lysosomal and cytolytic granule exocytosis. Critical factor involved in NK cell-mediated cytotoxicity. Drives the polarization of cytolytic granules and microtubule-organizing centers (MTOCs) toward the immune synapse between effector NK lymphocytes and target cells. In neurons, mediates the anterograde axonal long-range transport of presynaptic lysosome-related vesicles required for presynaptic biogenesis and synaptic function. Also acts as a regulator of endosome to lysosome trafficking pathways of special significance for host defense. Recruits RUFY1 onto early endosomes regulating endosomes to trans-Golgi network proteins retrieval. Regulates cargo trafficking to lysosomes by binding to PLEKHM1 and recruiting the HOPS subunit VPS41, resulting in functional assembly of the HOPS complex on lysosomal membranes. Plays an important role in cargo delivery to lysosomes for antigen presentation and microbial killing. Directs the intersection of CD1d with lipid antigens in lysosomes, and plays a role in intersecting phagosomes with lysosomes to generate phagolysosomes that kill microbes. Involved in the process of MHC II presentation. Regulates the delivery of antigens to lysosomes and the formation of MHC II-peptide complexes through the recruitment of the HOPS complex to lysosomes allowing the fusion of late endosomes to lysosomes. May play a role in chromosome segregation. This chain is ADP-ribosylation factor-like protein 8B (ARL8B), found in Macaca fascicularis (Crab-eating macaque).